The following is a 180-amino-acid chain: Large ribosomal subunit protein uL5 (180 aa).

This sequence belongs to the universal ribosomal protein uL5 family. Part of the 50S ribosomal subunit; part of the 5S rRNA/L5/L18/L25 subcomplex. Contacts the 5S rRNA and the P site tRNA. Forms a bridge to the 30S subunit in the 70S ribosome.

This is one of the proteins that bind and probably mediate the attachment of the 5S RNA into the large ribosomal subunit, where it forms part of the central protuberance. In the 70S ribosome it contacts protein S13 of the 30S subunit (bridge B1b), connecting the 2 subunits; this bridge is implicated in subunit movement. Contacts the P site tRNA; the 5S rRNA and some of its associated proteins might help stabilize positioning of ribosome-bound tRNAs. The chain is Large ribosomal subunit protein uL5 from Polynucleobacter necessarius subsp. necessarius (strain STIR1).